A 403-amino-acid polypeptide reads, in one-letter code: Argininosuccinate synthase (403 aa).

Ala10–Ser18 is an ATP binding site. Tyr87 contributes to the L-citrulline binding site. Gly117 is an ATP binding site. L-aspartate is bound by residues Thr119, Asn123, and Asp124. Asn123 is a binding site for L-citrulline. L-citrulline contacts are provided by Arg127, Ser175, Ser184, Glu260, and Tyr272.

The protein belongs to the argininosuccinate synthase family. Type 1 subfamily. Homotetramer.

The protein resides in the cytoplasm. It carries out the reaction L-citrulline + L-aspartate + ATP = 2-(N(omega)-L-arginino)succinate + AMP + diphosphate + H(+). Its pathway is amino-acid biosynthesis; L-arginine biosynthesis; L-arginine from L-ornithine and carbamoyl phosphate: step 2/3. The polypeptide is Argininosuccinate synthase (Bacillus licheniformis (strain ATCC 14580 / DSM 13 / JCM 2505 / CCUG 7422 / NBRC 12200 / NCIMB 9375 / NCTC 10341 / NRRL NRS-1264 / Gibson 46)).